The following is a 225-amino-acid chain: Protein-L-isoaspartate O-methyltransferase (225 aa).

Ser75 is an active-site residue.

It belongs to the methyltransferase superfamily. L-isoaspartyl/D-aspartyl protein methyltransferase family.

Its subcellular location is the cytoplasm. The enzyme catalyses [protein]-L-isoaspartate + S-adenosyl-L-methionine = [protein]-L-isoaspartate alpha-methyl ester + S-adenosyl-L-homocysteine. Functionally, catalyzes the methyl esterification of L-isoaspartyl residues in peptides and proteins that result from spontaneous decomposition of normal L-aspartyl and L-asparaginyl residues. It plays a role in the repair and/or degradation of damaged proteins. This is Protein-L-isoaspartate O-methyltransferase from Xanthomonas campestris pv. campestris (strain 8004).